Reading from the N-terminus, the 457-residue chain is uncharacterized protein (457 aa).

The 59-residue stretch at 6–64 (PVHKGEVLDVTIMDLTYQGMGVAKVDNYPIFIENALPEEKITVKVTKTTKNFAFGDVEK) folds into the TRAM domain. S-adenosyl-L-methionine contacts are provided by Gln287, Tyr316, Glu337, and Asp385. Cys412 (nucleophile) is an active-site residue.

It belongs to the class I-like SAM-binding methyltransferase superfamily. RNA M5U methyltransferase family.

This is an uncharacterized protein from Lactiplantibacillus plantarum (strain ATCC BAA-793 / NCIMB 8826 / WCFS1) (Lactobacillus plantarum).